The following is a 128-amino-acid chain: Protein yippee-like At3g08990 (128 aa).

The Yippee domain occupies 12–109; sequence LVYSCKYCQT…LERFKVLGPY (98 aa). Zn(2+) contacts are provided by Cys-16, Cys-19, Cys-72, and Cys-75.

Belongs to the yippee family.

The protein is Protein yippee-like At3g08990 of Arabidopsis thaliana (Mouse-ear cress).